A 312-amino-acid chain; its full sequence is Olfactory receptor 6X1 (312 aa).

Residues 1 to 23 (MRNGTVITEFILLGFPVIQGLQT) lie on the Extracellular side of the membrane. N-linked (GlcNAc...) asparagine glycosylation occurs at Asn-3. Residues 24-44 (PLFIAIFLTYILTLAGNGLII) form a helical membrane-spanning segment. Topologically, residues 45–52 (ATVWAEPR) are cytoplasmic. A helical transmembrane segment spans residues 53 to 73 (LQIPMYFFLCNLSFLEIWYTT). Residues 74–97 (TVIPKLLGTFVVARTVICMSCCLL) are Extracellular-facing. The cysteines at positions 95 and 187 are disulfide-linked. The helical transmembrane segment at 98–118 (QAFFHFFVGTTEFLILTIMSF) threads the bilayer. The Cytoplasmic segment spans residues 119–137 (DRYLTICNPLHHPTIMTSK). A helical membrane pass occupies residues 138–158 (LCLQLALSSWVVGFTIVFCQT). At 159-195 (MLLIQLPFCGNNVISHFYCDVGPSLKAACIDTSILEL) the chain is on the extracellular side. The chain crosses the membrane as a helical span at residues 196–215 (LGVIATILVIPGSLLFNMIS). Residues 216 to 235 (YIYILSAILRIPSATGHQKT) are Cytoplasmic-facing. Residues 236 to 256 (FSTCASHLTVVSLLYGAVLFM) traverse the membrane as a helical segment. The Extracellular segment spans residues 257–269 (YLRPTAHSSFKIN). A helical transmembrane segment spans residues 270 to 290 (KVVSVLNTILTPLLNPFIYTI). Over 291–312 (RNKEVKGALRKAMTCPKTGHAK) the chain is Cytoplasmic.

Belongs to the G-protein coupled receptor 1 family.

The protein resides in the cell membrane. Odorant receptor. This is Olfactory receptor 6X1 (OR6X1) from Homo sapiens (Human).